Here is a 278-residue protein sequence, read N- to C-terminus: Probable NADP-dependent mannitol dehydrogenase (278 aa).

I45, N117, and K152 together coordinate NADP(+). Residues S171 and Y186 each act as proton donor in the active site. Residues Y186, K190, and T220 each coordinate NADP(+). Catalysis depends on K190, which acts as the Lowers pKa of active site Tyr.

It belongs to the short-chain dehydrogenases/reductases (SDR) family. Homotetramer.

The enzyme catalyses D-mannitol + NADP(+) = D-fructose + NADPH + H(+). Functionally, versatile oxidoreductase that catalyzes the oxidation and reduction of polar as well as non-polar substrates at a very broad pH range. Preferentially oxidizes secondary alcohols. Has highest activity for racemic 2-heptanol and racemic octanol. Is also an efficient reductase for selected substrates. Substrate selectivity was found for medium chain length ketones with the carbonyl function at position C-2. Has highest activities for ribulose and fructose. The enzyme is (R)-selective in the reduction direction and produces exclusively the (R)-enantiomer. The protein is Probable NADP-dependent mannitol dehydrogenase of Yarrowia lipolytica (strain CLIB 122 / E 150) (Yeast).